Reading from the N-terminus, the 135-residue chain is Large ribosomal subunit protein uL22 (135 aa).

The disordered stretch occupies residues 112-135 (KKPEKKKLKAKSAKTEEAPKAAEV). A compositionally biased stretch (basic and acidic residues) spans 124–135 (AKTEEAPKAAEV).

Belongs to the universal ribosomal protein uL22 family. As to quaternary structure, part of the 50S ribosomal subunit.

Its function is as follows. This protein binds specifically to 23S rRNA; its binding is stimulated by other ribosomal proteins, e.g. L4, L17, and L20. It is important during the early stages of 50S assembly. It makes multiple contacts with different domains of the 23S rRNA in the assembled 50S subunit and ribosome. In terms of biological role, the globular domain of the protein is located near the polypeptide exit tunnel on the outside of the subunit, while an extended beta-hairpin is found that lines the wall of the exit tunnel in the center of the 70S ribosome. In Brachyspira hyodysenteriae (strain ATCC 49526 / WA1), this protein is Large ribosomal subunit protein uL22.